We begin with the raw amino-acid sequence, 262 residues long: Thiazole synthase (262 aa).

K104 (schiff-base intermediate with DXP) is an active-site residue. 1-deoxy-D-xylulose 5-phosphate contacts are provided by residues G165, 191-192 (AG), and 213-214 (NT).

Belongs to the ThiG family. As to quaternary structure, homotetramer. Forms heterodimers with either ThiH or ThiS.

It localises to the cytoplasm. It carries out the reaction [ThiS sulfur-carrier protein]-C-terminal-Gly-aminoethanethioate + 2-iminoacetate + 1-deoxy-D-xylulose 5-phosphate = [ThiS sulfur-carrier protein]-C-terminal Gly-Gly + 2-[(2R,5Z)-2-carboxy-4-methylthiazol-5(2H)-ylidene]ethyl phosphate + 2 H2O + H(+). It participates in cofactor biosynthesis; thiamine diphosphate biosynthesis. Its function is as follows. Catalyzes the rearrangement of 1-deoxy-D-xylulose 5-phosphate (DXP) to produce the thiazole phosphate moiety of thiamine. Sulfur is provided by the thiocarboxylate moiety of the carrier protein ThiS. In vitro, sulfur can be provided by H(2)S. The chain is Thiazole synthase from Alkalilimnicola ehrlichii (strain ATCC BAA-1101 / DSM 17681 / MLHE-1).